The primary structure comprises 197 residues: MAEEIERVGRLVVFSAPSGTGKSTIARRVLERFPSMRFSVSATTRPMREGEVDGVNYHFLSKEDFESEIRNGGFIEHEFFFGNHYGTLLQKTREAMAQGTDLLLDLDVKGAMNLKKLFPDSSLLVFLAPPSMDVLKERLQSRKSEDEESLKLRLERARLELGFADRFDTVIINDTLEDAVEAVILAISNFLSTKQTT.

The Guanylate kinase-like domain occupies 9–188; the sequence is GRLVVFSAPS…AVEAVILAIS (180 aa). 16 to 23 serves as a coordination point for ATP; sequence APSGTGKS.

It belongs to the guanylate kinase family.

It is found in the cytoplasm. The catalysed reaction is GMP + ATP = GDP + ADP. In terms of biological role, essential for recycling GMP and indirectly, cGMP. This Chlorobium luteolum (strain DSM 273 / BCRC 81028 / 2530) (Pelodictyon luteolum) protein is Guanylate kinase.